We begin with the raw amino-acid sequence, 317 residues long: Carbonic anhydrase 5B, mitochondrial (317 aa).

Residues 1 to 33 constitute a mitochondrion transit peptide; that stretch reads MVVMNSLRVILQASPGKLLWRKFQIPRFMPARP. Positions 37 to 296 constitute an Alpha-carbonic anhydrase domain; it reads YTCTYKTRNR…LMNRTVRSSF (260 aa). 3 residues coordinate Zn(2+): histidine 130, histidine 132, and histidine 155. Residue 235–236 coordinates substrate; the sequence is TT.

The protein belongs to the alpha-carbonic anhydrase family. Requires Zn(2+) as cofactor. As to expression, strongest expression in heart, pancreas, kidney, placenta, lung, and skeletal muscle. Not expressed in liver.

The protein resides in the mitochondrion. It catalyses the reaction hydrogencarbonate + H(+) = CO2 + H2O. Inhibited by coumarins, sulfonamide derivatives such as acetazolamide (AZA), saccharin and Foscarnet (phosphonoformate trisodium salt). Functionally, mitochondrial carbonic anhydrase that catalyzes the reversible conversion of carbon dioxide to bicarbonate/HCO3. This Homo sapiens (Human) protein is Carbonic anhydrase 5B, mitochondrial (CA5B).